A 130-amino-acid chain; its full sequence is Small ribosomal subunit protein uS8 (130 aa).

This sequence belongs to the universal ribosomal protein uS8 family. Part of the 30S ribosomal subunit.

Its function is as follows. One of the primary rRNA binding proteins, it binds directly to 16S rRNA central domain where it helps coordinate assembly of the platform of the 30S subunit. This chain is Small ribosomal subunit protein uS8, found in Pyrobaculum islandicum (strain DSM 4184 / JCM 9189 / GEO3).